We begin with the raw amino-acid sequence, 459 residues long: Exodeoxyribonuclease 7 large subunit (459 aa).

It belongs to the XseA family. As to quaternary structure, heterooligomer composed of large and small subunits.

It is found in the cytoplasm. It catalyses the reaction Exonucleolytic cleavage in either 5'- to 3'- or 3'- to 5'-direction to yield nucleoside 5'-phosphates.. In terms of biological role, bidirectionally degrades single-stranded DNA into large acid-insoluble oligonucleotides, which are then degraded further into small acid-soluble oligonucleotides. The protein is Exodeoxyribonuclease 7 large subunit of Pseudomonas fluorescens (strain SBW25).